The sequence spans 398 residues: 4-hydroxy-3-methylbut-2-enyl diphosphate reductase (398 aa).

C66 is a [4Fe-4S] cluster binding site. H96 lines the (2E)-4-hydroxy-3-methylbut-2-enyl diphosphate pocket. Dimethylallyl diphosphate is bound at residue H96. Residue H96 coordinates isopentenyl diphosphate. C157 provides a ligand contact to [4Fe-4S] cluster. H185 lines the (2E)-4-hydroxy-3-methylbut-2-enyl diphosphate pocket. H185 contributes to the dimethylallyl diphosphate binding site. An isopentenyl diphosphate-binding site is contributed by H185. Catalysis depends on E187, which acts as the Proton donor. T250 provides a ligand contact to (2E)-4-hydroxy-3-methylbut-2-enyl diphosphate. C288 is a binding site for [4Fe-4S] cluster. S317, S318, N319, and S380 together coordinate (2E)-4-hydroxy-3-methylbut-2-enyl diphosphate. Dimethylallyl diphosphate-binding residues include S317, S318, N319, and S380. Isopentenyl diphosphate-binding residues include S317, S318, N319, and S380.

The protein belongs to the IspH family. The cofactor is [4Fe-4S] cluster.

It catalyses the reaction isopentenyl diphosphate + 2 oxidized [2Fe-2S]-[ferredoxin] + H2O = (2E)-4-hydroxy-3-methylbut-2-enyl diphosphate + 2 reduced [2Fe-2S]-[ferredoxin] + 2 H(+). The catalysed reaction is dimethylallyl diphosphate + 2 oxidized [2Fe-2S]-[ferredoxin] + H2O = (2E)-4-hydroxy-3-methylbut-2-enyl diphosphate + 2 reduced [2Fe-2S]-[ferredoxin] + 2 H(+). Its pathway is isoprenoid biosynthesis; dimethylallyl diphosphate biosynthesis; dimethylallyl diphosphate from (2E)-4-hydroxy-3-methylbutenyl diphosphate: step 1/1. It participates in isoprenoid biosynthesis; isopentenyl diphosphate biosynthesis via DXP pathway; isopentenyl diphosphate from 1-deoxy-D-xylulose 5-phosphate: step 6/6. Catalyzes the conversion of 1-hydroxy-2-methyl-2-(E)-butenyl 4-diphosphate (HMBPP) into a mixture of isopentenyl diphosphate (IPP) and dimethylallyl diphosphate (DMAPP). Acts in the terminal step of the DOXP/MEP pathway for isoprenoid precursor biosynthesis. The polypeptide is 4-hydroxy-3-methylbut-2-enyl diphosphate reductase (Prochlorococcus marinus (strain MIT 9301)).